A 232-amino-acid chain; its full sequence is Small ribosomal subunit protein uS3 (232 aa).

The 69-residue stretch at 39-107 folds into the KH type-2 domain; that stretch reads IREILHKELK…DVVINIVEIR (69 aa).

This sequence belongs to the universal ribosomal protein uS3 family. As to quaternary structure, part of the 30S ribosomal subunit. Forms a tight complex with proteins S10 and S14.

Binds the lower part of the 30S subunit head. Binds mRNA in the 70S ribosome, positioning it for translation. This chain is Small ribosomal subunit protein uS3, found in Rhodopseudomonas palustris (strain BisB18).